The sequence spans 1482 residues: Chromosome partition protein MukB (1482 aa).

34–41 (GGNGAGKS) serves as a coordination point for ATP. Coiled-coil stretches lie at residues 326-472 (LEAD…QTAH), 507-602 (NQRH…RRAP), 780-805 (RAAR…ATLS), 832-1110 (DDPE…REQV), and 1209-1265 (VEAI…LQSV). The flexible hinge stretch occupies residues 666 to 783 (PGGSEDPRLN…SLPLFGRAAR (118 aa)).

This sequence belongs to the SMC family. MukB subfamily. As to quaternary structure, homodimerization via its hinge domain. Binds to DNA via its C-terminal region. Interacts, and probably forms a ternary complex, with MukE and MukF via its C-terminal region. The complex formation is stimulated by calcium or magnesium. Interacts with tubulin-related protein FtsZ.

It localises to the cytoplasm. The protein localises to the nucleoid. Functionally, plays a central role in chromosome condensation, segregation and cell cycle progression. Functions as a homodimer, which is essential for chromosome partition. Involved in negative DNA supercoiling in vivo, and by this means organize and compact chromosomes. May achieve or facilitate chromosome segregation by condensation DNA from both sides of a centrally located replisome during cell division. This chain is Chromosome partition protein MukB, found in Klebsiella pneumoniae subsp. pneumoniae (strain ATCC 700721 / MGH 78578).